The primary structure comprises 222 residues: Ribosomal RNA small subunit methyltransferase G (222 aa).

S-adenosyl-L-methionine-binding positions include Gly73, Leu78, 124–125, and Arg137; that span reads AE.

Belongs to the methyltransferase superfamily. RNA methyltransferase RsmG family.

The protein localises to the cytoplasm. In terms of biological role, specifically methylates the N7 position of guanine in position 518 of 16S rRNA. This chain is Ribosomal RNA small subunit methyltransferase G, found in Acidothermus cellulolyticus (strain ATCC 43068 / DSM 8971 / 11B).